Consider the following 155-residue polypeptide: SsrA-binding protein (155 aa).

Belongs to the SmpB family.

The protein resides in the cytoplasm. Required for rescue of stalled ribosomes mediated by trans-translation. Binds to transfer-messenger RNA (tmRNA), required for stable association of tmRNA with ribosomes. tmRNA and SmpB together mimic tRNA shape, replacing the anticodon stem-loop with SmpB. tmRNA is encoded by the ssrA gene; the 2 termini fold to resemble tRNA(Ala) and it encodes a 'tag peptide', a short internal open reading frame. During trans-translation Ala-aminoacylated tmRNA acts like a tRNA, entering the A-site of stalled ribosomes, displacing the stalled mRNA. The ribosome then switches to translate the ORF on the tmRNA; the nascent peptide is terminated with the 'tag peptide' encoded by the tmRNA and targeted for degradation. The ribosome is freed to recommence translation, which seems to be the essential function of trans-translation. The chain is SsrA-binding protein from Lactococcus lactis subsp. lactis (strain IL1403) (Streptococcus lactis).